We begin with the raw amino-acid sequence, 241 residues long: Uridylate kinase (241 aa).

11–14 (KFSG) serves as a coordination point for ATP. An involved in allosteric activation by GTP region spans residues 19-24 (GENGFG). Glycine 53 is a binding site for UMP. 2 residues coordinate ATP: glycine 54 and arginine 58. Residues aspartate 74 and 135–142 (TGNPFFTT) each bind UMP. ATP is bound by residues threonine 162, tyrosine 168, and aspartate 171.

This sequence belongs to the UMP kinase family. Homohexamer.

It localises to the cytoplasm. The catalysed reaction is UMP + ATP = UDP + ADP. It participates in pyrimidine metabolism; CTP biosynthesis via de novo pathway; UDP from UMP (UMPK route): step 1/1. Allosterically activated by GTP. Inhibited by UTP. Functionally, catalyzes the reversible phosphorylation of UMP to UDP. The chain is Uridylate kinase from Wolinella succinogenes (strain ATCC 29543 / DSM 1740 / CCUG 13145 / JCM 31913 / LMG 7466 / NCTC 11488 / FDC 602W) (Vibrio succinogenes).